Consider the following 109-residue polypeptide: Probable guanidinium efflux system subunit GdnC (109 aa).

The next 4 helical transmembrane spans lie at tryptophan 3–alanine 23, alanine 26–alanine 46, valine 55–phenylalanine 75, and isoleucine 81–threonine 101.

Belongs to the drug/metabolite transporter (DMT) superfamily. Small multidrug resistance (SMR) (TC 2.A.7.1) family. YkkC/YkkD subfamily. As to quaternary structure, the efflux pump is composed of GdnC and GdnD.

The protein resides in the cell membrane. Functionally, probably involved in guanidinium transport. This chain is Probable guanidinium efflux system subunit GdnC, found in Bacillus licheniformis (strain ATCC 14580 / DSM 13 / JCM 2505 / CCUG 7422 / NBRC 12200 / NCIMB 9375 / NCTC 10341 / NRRL NRS-1264 / Gibson 46).